The sequence spans 634 residues: Alpha-L-iduronidase (634 aa).

The signal sequence occupies residues 1 to 16 (MLTFFAAFLAAPLALA). The alpha-D-mannopyranose site is built by proline 44, leucine 46, and histidine 48. Histidine 81 contributes to the alpha-L-iduronate binding site. Asparagine 100 is a glycosylation site (N-linked (GlcNAc...) asparagine). The alpha-L-iduronate site is built by asparagine 171 and glutamate 172. Glutamate 172 (proton donor) is an active-site residue. N-linked (GlcNAc...) asparagine glycosylation is found at asparagine 180 and asparagine 233. Alpha-L-iduronate is bound by residues lysine 254, glutamate 289, and glycine 295. Glutamate 289 acts as the Nucleophile in catalysis. Residue tryptophan 296 coordinates alpha-D-mannopyranose. The N-linked (GlcNAc...) asparagine glycan is linked to asparagine 326. Alpha-L-iduronate contacts are provided by aspartate 339 and arginine 353. N-linked (GlcNAc...) asparagine glycosylation is found at asparagine 362, asparagine 405, and asparagine 441. Cysteine 531 and cysteine 567 are oxidised to a cystine.

The protein belongs to the glycosyl hydrolase 39 family. As to quaternary structure, monomer. In terms of processing, N-glycosylation contributes to substrate binding and is required for full enzymatic activity. Ubiquitous.

The protein resides in the lysosome. The catalysed reaction is Hydrolysis of unsulfated alpha-L-iduronosidic linkages in dermatan sulfate.. This is Alpha-L-iduronidase (Idua) from Mus musculus (Mouse).